Here is a 2771-residue protein sequence, read N- to C-terminus: Teneurin-4 (2771 aa).

Over residues 1–22 (MDVKERKPYRSLTRRRDAERRY) the composition is skewed to basic and acidic residues. A disordered region spans residues 1–45 (MDVKERKPYRSLTRRRDAERRYTSSSADSEEGKGPQKSYSSSETL). The Teneurin N-terminal domain occupies 1 to 341 (MDVKERKPYR…KPSKYCNWKC (341 aa)). Residues 1–345 (MDVKERKPYR…YCNWKCAALS (345 aa)) are Cytoplasmic-facing. A Phosphoserine modification is found at Ser124. Residues 132–233 (WGRSTRSGRS…PPAGSAQEPT (102 aa)) are disordered. Low complexity predominate over residues 134 to 155 (RSTRSGRSSCLSSRANSNLTLT). Residues 156–166 (DTEHENTETDH) show a composition bias toward basic and acidic residues. The residue at position 178 (Thr178) is a Phosphothreonine. The span at 191-211 (QHHAASINSLNRGNFTPRSNP) shows a compositional bias: polar residues. The chain crosses the membrane as a helical span at residues 346-366 (AILISATLVILLAYFVAMHLF). Topologically, residues 367–2771 (GLNWHLQPME…FMRQSEMGRR (2405 aa)) are extracellular. Residues 403–428 (SGGTGLETPDRKGKGAAEGKPSSLFP) are disordered. Over residues 410–419 (TPDRKGKGAA) the composition is skewed to basic and acidic residues. N-linked (GlcNAc...) asparagine glycosylation is present at Asn469. The segment at 509–528 (ARSLEGPQRQSRGPVPPSSH) is disordered. EGF-like domains follow at residues 564 to 595 (SVDNCPSNCYGNGDCISGTCHCFLGFLGPDCG), 596 to 626 (RASCPVLCSGNGQYMKGRCLCHSGWKGAECD), 628 to 660 (PTNQCIDVACSSHGTCIMGTCICNPGYKGESCE), 661 to 692 (EVDCMDPTCSSRGVCVRGECHCSVGWGGTNCE), 694 to 727 (PRATCLDQCSGHGTFLPDTGLCNCDPSWTGHDCS), 728 to 759 (IEICAADCGGHGVCVGGTCRCEDGWMGAACDQ), 760 to 789 (RACHPRCAEHGTCRDGKCECSPGWNGEHCT), and 790 to 833 (IAHY…TGCD). Disulfide bonds link Cys568/Cys578, Cys572/Cys583, Cys585/Cys594, Cys603/Cys614, Cys616/Cys625, Cys632/Cys643, Cys637/Cys648, Cys650/Cys659, Cys664/Cys675, Cys669/Cys680, Cys682/Cys691, Cys702/Cys715, Cys717/Cys726, Cys731/Cys741, Cys735/Cys746, Cys748/Cys757, Cys762/Cys772, Cys766/Cys777, Cys779/Cys788, Cys802/Cys812, Cys806/Cys821, and Cys823/Cys832. N-linked (GlcNAc...) asparagine glycosylation is found at Asn942 and Asn1261. NHL repeat units lie at residues 1218 to 1261 (SCPS…PSGN), 1266 to 1310 (LEMR…VKST), 1336 to 1380 (TRCG…NGII), 1395 to 1446 (LSCD…VAGR), and 1525 to 1568 (CFSG…IRKN). Residues 1578-1597 (YELSSPIDQELYLFDTSGKH) form a YD 1 repeat. N-linked (GlcNAc...) asparagine glycosylation is present at Asn1611. YD repeat units follow at residues 1614 to 1634 (YTGDGDITHITDNNGNMVNVR), 1677 to 1696 (YHGNSGLLATKSNENGWTTF), and 1697 to 1719 (YEYDSFGRLTNVTFPTGQVSSFR). Asn1707, Asn1743, Asn1801, and Asn1886 each carry an N-linked (GlcNAc...) asparagine glycan. YD repeat units lie at residues 1889–1908 (YSPGGHIAGIQRGIMSERME), 1930–1948 (YLEKSMVLHLHSQRQYIFE), 1949–1969 (FDKNDRLSSVTMPNVARQTLE), 1976–1993 (YYRNIYQPPEGNASVIQD), 1994–2015 (FTEDGHLLHTFYLGTGRRVIYK), 2016–2033 (YGKLSKLAETLYDTTKVS), 2036–2056 (YDETAGMLKTVNLQNEGFTCT), 2059–2079 (YRQIGPLIDRQIFRFTEEGMV), 2087–2106 (YDNSFRVTSMQAVINETPLP), 2112–2129 (YDDVSGKTEQFGKFGVIY), 2130–2156 (YDINQIITTAVMTHTKHFDAYGRMKEV), 2158–2171 (YEIFRSLMYWMTVQ), 2172–2195 (YDNMGRVVKKELKVGPYANTTRYS), 2198–2218 (YDADGQLQTVSINDKPLWRYS), 2219–2239 (YDLNGNLHLLSPGNSARLTPL), 2241–2261 (YDLRDRITRLGDVQYKMDEDG), 2273–2293 (YNSAGLLIKAYNRASGWSVRY), and 2295–2315 (YDGLGRRVSSKSSHSHHLQFF). An N-linked (GlcNAc...) asparagine glycan is attached at Asn1987. Residue Asn2190 is glycosylated (N-linked (GlcNAc...) asparagine). N-linked (GlcNAc...) asparagine glycosylation occurs at Asn2330. Residues 2341-2382 (YDLQGHLFAMELSSGDEFYIACDNIGTPLAVFSGTGLMIKQI) form a YD 23 repeat. Asn2648 carries N-linked (GlcNAc...) asparagine glycosylation.

This sequence belongs to the tenascin family. Teneurin subfamily. In terms of assembly, homodimer; disulfide-linked. May also form heterodimer with either TENM1 or TENM2 or TENM3. As to expression, expressed in brain and spinal cord (at protein level). Expressed in neurons and oligodendrocytes of the spinal cord. Expressed weakly in kidney, lung and spleen. Expressed in the cortex, CA1, CA2 and CA3 of the hippocampus. Expressed in the white matter, Purkinje cells and molecular layer of the cerebellum.

Its subcellular location is the cell membrane. It is found in the cell projection. The protein localises to the nucleus. The protein resides in the cytoplasm. In terms of biological role, involved in neural development, regulating the establishment of proper connectivity within the nervous system. Plays a role in the establishment of the anterior-posterior axis during gastrulation. Regulates the differentiation and cellular process formation of oligodendrocytes and myelination of small-diameter axons in the central nervous system (CNS). Promotes activation of focal adhesion kinase. May function as a cellular signal transducer. The sequence is that of Teneurin-4 (Tenm4) from Mus musculus (Mouse).